The chain runs to 144 residues: Grifin (144 aa).

The Galectin domain occupies 5–133 (FEAFCAGGLA…DHQLAQVELA (129 aa)). Position 138 is a phosphoserine (Ser-138).

As to quaternary structure, homodimer. As to expression, lens-specific. Located at the interface between lens fiber cells (at protein level).

The protein is Grifin (Grifin) of Rattus norvegicus (Rat).